The chain runs to 239 residues: Transcriptional regulatory protein BtsR (239 aa).

The region spanning 3 to 116 (KVLIVDDEPL…RLEKTLHRLR (114 aa)) is the Response regulatory domain. Position 54 is a 4-aspartylphosphate (Asp54). The HTH LytTR-type domain maps to 137 to 239 (IPCTGHSRIY…LKSLKEAIGL (103 aa)).

Post-translationally, phosphorylated by BtsS.

Its function is as follows. Member of the two-component regulatory system BtsS/BtsR. BtsR regulates expression of btsT by binding to its promoter region. This is Transcriptional regulatory protein BtsR from Salmonella typhimurium (strain LT2 / SGSC1412 / ATCC 700720).